The primary structure comprises 325 residues: Interleukin-10 receptor subunit beta (325 aa).

Positions 1–19 (MAWSLGSWLGGCLLVSALG) are cleaved as a signal peptide. Over 20–220 (MVPPPENVRM…QTTHDETVPS (201 aa)) the chain is Extracellular. 2 consecutive Fibronectin type-III domains span residues 23–111 (PPEN…VDDT) and 114–216 (GPPG…THDE). N-linked (GlcNAc...) asparagine glycans are attached at residues asparagine 49, asparagine 68, asparagine 102, and asparagine 161. Cysteines 66 and 74 form a disulfide. Residues cysteine 188 and cysteine 209 are joined by a disulfide bond. Residues 221 to 242 (WMVAVILMASVFMVCLALLGCF) traverse the membrane as a helical segment. The Cytoplasmic portion of the chain corresponds to 243–325 (ALLWCVYKKT…GTPPGQGPQS (83 aa)). The disordered stretch occupies residues 301–325 (DSESGKQNPGDSCSLGTPPGQGPQS). The segment covering 305–315 (GKQNPGDSCSL) has biased composition (polar residues).

This sequence belongs to the type II cytokine receptor family. As to quaternary structure, heterodimer with IFNLR1.

Its subcellular location is the membrane. Its function is as follows. Shared cell surface receptor required for the activation of five class 2 cytokines: IL10, IL22, IL26, IL28, and IFNL1. The IFNLR1/IL10RB dimer is a receptor for the cytokine ligands IFNL2 and IFNL3 and mediates their antiviral activity. The ligand/receptor complex stimulate the activation of the JAK/STAT signaling pathway leading to the expression of IFN-stimulated genes (ISG), which contribute to the antiviral state. The chain is Interleukin-10 receptor subunit beta (IL10RB) from Homo sapiens (Human).